The primary structure comprises 182 residues: Large ribosomal subunit protein uL6 (182 aa).

It belongs to the universal ribosomal protein uL6 family. As to quaternary structure, part of the 50S ribosomal subunit.

This protein binds to the 23S rRNA, and is important in its secondary structure. It is located near the subunit interface in the base of the L7/L12 stalk, and near the tRNA binding site of the peptidyltransferase center. This Methanococcus maripaludis (strain C5 / ATCC BAA-1333) protein is Large ribosomal subunit protein uL6.